Reading from the N-terminus, the 156-residue chain is Ribosomal RNA large subunit methyltransferase H (156 aa).

Residues Leu73, Gly104, and Ile123–Leu128 contribute to the S-adenosyl-L-methionine site.

Belongs to the RNA methyltransferase RlmH family. In terms of assembly, homodimer.

The protein localises to the cytoplasm. It carries out the reaction pseudouridine(1915) in 23S rRNA + S-adenosyl-L-methionine = N(3)-methylpseudouridine(1915) in 23S rRNA + S-adenosyl-L-homocysteine + H(+). Functionally, specifically methylates the pseudouridine at position 1915 (m3Psi1915) in 23S rRNA. The polypeptide is Ribosomal RNA large subunit methyltransferase H (Burkholderia cenocepacia (strain HI2424)).